Here is a 371-residue protein sequence, read N- to C-terminus: Liposome tubulation protein MamY (371 aa).

Residues 1–18 are Cytoplasmic-facing; that stretch reads MLMNFVNNVSKTINGGAR. A helical membrane pass occupies residues 19–39; it reads IVYVGSFSWAVLSLLFVTAFS. The Lumenal portion of the chain corresponds to 40 to 51; it reads GWNNIFSMLPHE. A helical transmembrane segment spans residues 52–72; the sequence is IFILVLTISLPIALIVLIFML. Residues 73–371 lie on the Cytoplasmic side of the membrane; it reads SQIVRTVESV…LIDGTPISDA (299 aa).

Belongs to the magnetosome MamY family. As to quaternary structure, probably interacts with MamX and MamZ proteins.

The protein localises to the magnetosome membrane. In terms of biological role, may be involved in constriction of the cell inner membrane to form mature magnetosomes. Binds cardiolipin and liposomes. May function with MamX, MamZ amd Mms6 in biomineralization. The polypeptide is Liposome tubulation protein MamY (Magnetospirillum gryphiswaldense (strain DSM 6361 / JCM 21280 / NBRC 15271 / MSR-1)).